The following is a 143-amino-acid chain: Antiholin-like protein LrgA (143 aa).

4 helical membrane-spanning segments follow: residues 6-26 (VYSF…SNII), 30-50 (LPIP…LLCL), 61-81 (LGTA…ISVI), and 97-117 (VIVV…QFIL).

It belongs to the CidA/LrgA family. LrgA subfamily.

It is found in the cell membrane. Inhibits the expression or activity of extracellular murein hydrolases by interacting, possibly with LrgB, with the holin-like protein CidA. The LrgAB and CidA proteins may affect the proton motive force of the membrane. May be involved in programmed cell death (PCD), possibly triggering PCD in response to antibiotics and environmental stresses. This is Antiholin-like protein LrgA from Bacillus cereus (strain AH187).